We begin with the raw amino-acid sequence, 307 residues long: Putative lipid kinase SERP0390 (307 aa).

The region spanning 3 to 139 (QPYNHGVLFY…YDVLKVNDLY (137 aa)) is the DAGKc domain. Residues serine 44, 74 to 80 (GDGTLNE), and threonine 101 each bind ATP. Residues serine 220, aspartate 223, and arginine 225 each coordinate Mg(2+). Residue glutamate 281 is the Proton acceptor of the active site.

It belongs to the diacylglycerol/lipid kinase family. Requires Mg(2+) as cofactor.

Functionally, may catalyze the ATP-dependent phosphorylation of lipids other than diacylglycerol (DAG). The chain is Putative lipid kinase SERP0390 from Staphylococcus epidermidis (strain ATCC 35984 / DSM 28319 / BCRC 17069 / CCUG 31568 / BM 3577 / RP62A).